The chain runs to 437 residues: GTPase Obg (437 aa).

Positions Ser-2–Leu-160 constitute an Obg domain. Positions Ala-161–Ala-338 constitute an OBG-type G domain. Residues Gly-167–Ser-174, Phe-192–Val-196, Asp-214–Gly-217, Asn-284–Asp-287, and Ser-319–Leu-321 each bind GTP. 2 residues coordinate Mg(2+): Ser-174 and Thr-194. In terms of domain architecture, OCT spans Gly-359–Asp-437.

It belongs to the TRAFAC class OBG-HflX-like GTPase superfamily. OBG GTPase family. As to quaternary structure, monomer. It depends on Mg(2+) as a cofactor.

It localises to the cytoplasm. An essential GTPase which binds GTP, GDP and possibly (p)ppGpp with moderate affinity, with high nucleotide exchange rates and a fairly low GTP hydrolysis rate. Plays a role in control of the cell cycle, stress response, ribosome biogenesis and in those bacteria that undergo differentiation, in morphogenesis control. This Streptococcus pyogenes serotype M3 (strain ATCC BAA-595 / MGAS315) protein is GTPase Obg.